We begin with the raw amino-acid sequence, 175 residues long: Protein CENTRORADIALIS-like (175 aa).

This sequence belongs to the phosphatidylethanolamine-binding protein family. In terms of tissue distribution, expressed in tissues surrounding vascular bundles in hypocotyl of 2-week-old plants.

It is found in the cytoplasm. Functionally, may form complexes with phosphorylated ligands by interfering with kinases and their effectors. Can substitute for TERMINAL FLOWER 1 (in vitro). The protein is Protein CENTRORADIALIS-like (CEN) of Arabidopsis thaliana (Mouse-ear cress).